The sequence spans 176 residues: Shikimate kinase (176 aa).

Residue 17-24 coordinates ATP; it reads GMMGVGKS.

Belongs to the shikimate kinase family.

The protein resides in the cytoplasm. It catalyses the reaction shikimate + ATP = 3-phosphoshikimate + ADP + H(+). The protein operates within metabolic intermediate biosynthesis; chorismate biosynthesis; chorismate from D-erythrose 4-phosphate and phosphoenolpyruvate: step 5/7. This Zymomonas mobilis subsp. mobilis (strain ATCC 31821 / ZM4 / CP4) protein is Shikimate kinase.